The sequence spans 86 residues: Tryptophan-containing weak neurotoxin (86 aa).

The signal sequence occupies residues 1–21 (MKTLLLTLVVVTIVCLDLGYT). 5 disulfides stabilise this stretch: Cys24–Cys45, Cys27–Cys32, Cys38–Cys63, Cys67–Cys78, and Cys79–Cys84.

It belongs to the three-finger toxin family. Ancestral subfamily. Orphan group II sub-subfamily. As to quaternary structure, monomer in solution. In terms of processing, the disulfide bond Cys-27-Cys-32 is probably not needed for efficient interaction of the toxin with the target receptor (Torpedo muscle or alpha-7/CHRNA7 nAChR). As to expression, expressed by the venom gland.

Its subcellular location is the secreted. In terms of biological role, neurotoxin that irreversibly inhibits nicotinic acetylcholine receptors (nAChR) and allosterically interacts with muscarinic acetylcholine receptors (mAChR). The loop II is involved in the interaction of this toxin with nAChR and mAChR. On nAChR, it acts as a competitive antagonist (muscle-type and alpha-7/CHRNA7) with IC(50) values in the micromolar range. On mAChR, in presence of ACh, it partially inhibits the effect of acetylcholine (ACh) (allosteric antagonist), whereas in the absence of ACh, it activates the receptor (allosteric agonist). It also shows a very weak inhibition of GABA(A) receptor composed of alpha-1-beta-3-gamma-2 (GABRA1 and GABRB3 and GABRG2) subunits (10 uM inhibit 31% current). In vivo, is nonlethal to mice at concentrations up to 20 mg/kg, but exerts a myorelaxant effect, induces a dose-dependent decrease in blood pressure and an increase in heart rate in mice and rats. This Naja kaouthia (Monocled cobra) protein is Tryptophan-containing weak neurotoxin.